The primary structure comprises 385 residues: Hsp70/Hsp90 co-chaperone CNS1 (385 aa).

The segment at 1-37 (MSSVNANGGYTKPQKYVPGPGDPELPPQLSEFKDKTS) is disordered. TPR repeat units lie at residues 83 to 116 (AENF…ECED), 121 to 154 (ESLY…NPKN), and 155 to 189 (VKCY…DPEN).

The protein belongs to the TTC4 family. Monomer. Component of Hsp70 and Hsp90 chaperone complexes. Interacts (via TPR repeats) with HSC82 and HSP82 (via C-terminal MEEVD pentapeptide). Interacts with CPR7, SSA1 and SPI1.

It localises to the cytoplasm. Functionally, co-chaperone that binds to the molecular chaperones Hsp90 (HSC82 and HSP82) and Hsp70 (SSA1). Stimulates SSA1 ATPase activity, but not Hsp90 ATPase activity. Involved in only a subset of Hsp90 functions. The polypeptide is Hsp70/Hsp90 co-chaperone CNS1 (CNS1) (Saccharomyces cerevisiae (strain ATCC 204508 / S288c) (Baker's yeast)).